The sequence spans 312 residues: Methionyl-tRNA formyltransferase (312 aa).

117–120 provides a ligand contact to (6S)-5,6,7,8-tetrahydrofolate; sequence SLLP.

Belongs to the Fmt family.

It carries out the reaction L-methionyl-tRNA(fMet) + (6R)-10-formyltetrahydrofolate = N-formyl-L-methionyl-tRNA(fMet) + (6S)-5,6,7,8-tetrahydrofolate + H(+). Attaches a formyl group to the free amino group of methionyl-tRNA(fMet). The formyl group appears to play a dual role in the initiator identity of N-formylmethionyl-tRNA by promoting its recognition by IF2 and preventing the misappropriation of this tRNA by the elongation apparatus. The polypeptide is Methionyl-tRNA formyltransferase (Bordetella bronchiseptica (strain ATCC BAA-588 / NCTC 13252 / RB50) (Alcaligenes bronchisepticus)).